Here is a 242-residue protein sequence, read N- to C-terminus: 2-C-methyl-D-erythritol 4-phosphate cytidylyltransferase (242 aa).

It belongs to the IspD/TarI cytidylyltransferase family. IspD subfamily.

The enzyme catalyses 2-C-methyl-D-erythritol 4-phosphate + CTP + H(+) = 4-CDP-2-C-methyl-D-erythritol + diphosphate. It participates in isoprenoid biosynthesis; isopentenyl diphosphate biosynthesis via DXP pathway; isopentenyl diphosphate from 1-deoxy-D-xylulose 5-phosphate: step 2/6. Functionally, catalyzes the formation of 4-diphosphocytidyl-2-C-methyl-D-erythritol from CTP and 2-C-methyl-D-erythritol 4-phosphate (MEP). The protein is 2-C-methyl-D-erythritol 4-phosphate cytidylyltransferase of Halorhodospira halophila (strain DSM 244 / SL1) (Ectothiorhodospira halophila (strain DSM 244 / SL1)).